A 245-amino-acid polypeptide reads, in one-letter code: Probable transcriptional regulatory protein SUN_1622 (245 aa).

The protein belongs to the TACO1 family.

The protein localises to the cytoplasm. In Sulfurovum sp. (strain NBC37-1), this protein is Probable transcriptional regulatory protein SUN_1622.